A 287-amino-acid chain; its full sequence is Spermidine/putrescine transport system permease protein PotB (287 aa).

Residues 1-10 (MKNTSKFQNV) are Cytoplasmic-facing. Residues 11–31 (VIVTIVGWLVLFVFLPNLMII) form a helical membrane-spanning segment. The Periplasmic segment spans residues 32–70 (GTSFLTRDDASFVKMVFTLDNYARLLDPLYFEVLLHSLN). An ABC transmembrane type-1 domain is found at 65–271 (LLHSLNMALI…IVMGLMLLIY (207 aa)). The chain crosses the membrane as a helical span at residues 71 to 91 (MALIATLSCLVLGYPFAWFLA). The Cytoplasmic segment spans residues 92-99 (KLPEKIRP). A helical transmembrane segment spans residues 100-120 (LLLFLLIVPFWTNSLIRIYGL). The Periplasmic segment spans residues 121–145 (KIFLSTKGYLNEFLLWLGVIDTPIR). A helical transmembrane segment spans residues 146–166 (IMFTPSAVIIGLVYILLPFMV). Residues 167–197 (MPLYSSIEKLDKPLLEAARDLGASKMQTFIR) are Cytoplasmic-facing. A helical membrane pass occupies residues 198–218 (IIIPLTMPGIVAGCLLVMLPA). Topologically, residues 219-251 (MGLFYVSDLMGGAKNLLIGNVIKVQFLNIRDWP) are periplasmic. The helical transmembrane segment at 252–272 (FGAATSITLTIVMGLMLLIYW) threads the bilayer. Residues 273 to 287 (RASRLLNKKVSDISD) lie on the Cytoplasmic side of the membrane.

It belongs to the binding-protein-dependent transport system permease family. CysTW subfamily.

The protein localises to the cell inner membrane. In terms of biological role, required for the activity of the bacterial periplasmic transport system of putrescine and spermidine. The chain is Spermidine/putrescine transport system permease protein PotB (potB) from Salmonella typhi.